The chain runs to 198 residues: Phosphoheptose isomerase (198 aa).

An SIS domain is found at 40–198 (IVTALRSGRK…IEAALMQDLS (159 aa)). Position 55–57 (55–57 (NGG)) interacts with substrate. Zn(2+) contacts are provided by H64 and E68. Residues E68, 97 to 98 (ND), 123 to 125 (STS), S128, and Q175 each bind substrate. Residues Q175 and H183 each contribute to the Zn(2+) site.

Belongs to the SIS family. GmhA subfamily. In terms of assembly, homotetramer. Zn(2+) is required as a cofactor.

It localises to the cytoplasm. The catalysed reaction is 2 D-sedoheptulose 7-phosphate = D-glycero-alpha-D-manno-heptose 7-phosphate + D-glycero-beta-D-manno-heptose 7-phosphate. Its pathway is carbohydrate biosynthesis; D-glycero-D-manno-heptose 7-phosphate biosynthesis; D-glycero-alpha-D-manno-heptose 7-phosphate and D-glycero-beta-D-manno-heptose 7-phosphate from sedoheptulose 7-phosphate: step 1/1. Catalyzes the isomerization of sedoheptulose 7-phosphate in D-glycero-D-manno-heptose 7-phosphate. The chain is Phosphoheptose isomerase from Bradyrhizobium sp. (strain BTAi1 / ATCC BAA-1182).